A 144-amino-acid chain; its full sequence is MFSTILIVCTGNICRSPIGERYLQQLLPSKNISSAGTQALVDHEADQSAVEVARKNGISLAGHLGRQFTSKLSKEYELILVMEKNHIEQISNIAPEARGKTMLFGHWLEQRDIPDPYRKSEEAFASVFKLIEQSALLWAEKLKA.

C9 serves as the catalytic Nucleophile. R15 is an active-site residue. D115 serves as the catalytic Proton donor.

This sequence belongs to the low molecular weight phosphotyrosine protein phosphatase family.

The catalysed reaction is O-phospho-L-tyrosyl-[protein] + H2O = L-tyrosyl-[protein] + phosphate. This is Putative low molecular weight protein-tyrosine-phosphatase from Klebsiella pneumoniae.